A 418-amino-acid chain; its full sequence is Adenylosuccinate synthetase 2 (418 aa).

Residues 12–18 (GDEGKGR) and 40–42 (GHT) each bind GTP. D13 functions as the Proton acceptor in the catalytic mechanism. Residues D13 and G40 each coordinate Mg(2+). Residues 13–16 (DEGK), 38–41 (NAGH), T127, K141, T239, and R301 each bind IMP. Catalysis depends on H41, which acts as the Proton donor. 297-303 (AVTGRPR) contributes to the substrate binding site. GTP-binding positions include R303, 329–331 (KID), and 407–409 (SVG).

It belongs to the adenylosuccinate synthetase family. Homodimer. Requires Mg(2+) as cofactor.

It is found in the cytoplasm. The catalysed reaction is IMP + L-aspartate + GTP = N(6)-(1,2-dicarboxyethyl)-AMP + GDP + phosphate + 2 H(+). Its pathway is purine metabolism; AMP biosynthesis via de novo pathway; AMP from IMP: step 1/2. In terms of biological role, plays an important role in the de novo pathway of purine nucleotide biosynthesis. Catalyzes the first committed step in the biosynthesis of AMP from IMP. This is Adenylosuccinate synthetase 2 from Pseudoalteromonas translucida (strain TAC 125).